Reading from the N-terminus, the 428-residue chain is Maltoporin (428 aa).

The N-terminal stretch at 1 to 21 (MKKTLLAVAIGGAMFATSAAA) is a signal peptide.

The protein belongs to the porin LamB (TC 1.B.3) family. In terms of assembly, homotrimer formed of three 18-stranded antiparallel beta-barrels, containing three independent channels.

Its subcellular location is the cell outer membrane. The enzyme catalyses beta-maltose(in) = beta-maltose(out). Functionally, involved in the transport of maltose and maltodextrins. The protein is Maltoporin of Mannheimia succiniciproducens (strain KCTC 0769BP / MBEL55E).